We begin with the raw amino-acid sequence, 152 residues long: D-aminoacyl-tRNA deacylase (152 aa).

The Gly-cisPro motif, important for rejection of L-amino acids motif lies at G142 to P143.

This sequence belongs to the DTD family. Homodimer.

It localises to the cytoplasm. The catalysed reaction is glycyl-tRNA(Ala) + H2O = tRNA(Ala) + glycine + H(+). It carries out the reaction a D-aminoacyl-tRNA + H2O = a tRNA + a D-alpha-amino acid + H(+). Its function is as follows. An aminoacyl-tRNA editing enzyme that deacylates mischarged D-aminoacyl-tRNAs. Also deacylates mischarged glycyl-tRNA(Ala), protecting cells against glycine mischarging by AlaRS. Acts via tRNA-based rather than protein-based catalysis; rejects L-amino acids rather than detecting D-amino acids in the active site. By recycling D-aminoacyl-tRNA to D-amino acids and free tRNA molecules, this enzyme counteracts the toxicity associated with the formation of D-aminoacyl-tRNA entities in vivo and helps enforce protein L-homochirality. This chain is D-aminoacyl-tRNA deacylase, found in Burkholderia ambifaria (strain ATCC BAA-244 / DSM 16087 / CCUG 44356 / LMG 19182 / AMMD) (Burkholderia cepacia (strain AMMD)).